Reading from the N-terminus, the 285-residue chain is Phosphatidylserine decarboxylase proenzyme (285 aa).

Active-site charge relay system; for autoendoproteolytic cleavage activity residues include Asp-89, His-146, and Ser-252. The Schiff-base intermediate with substrate; via pyruvic acid; for decarboxylase activity role is filled by Ser-252. Residue Ser-252 is modified to Pyruvic acid (Ser); by autocatalysis.

It belongs to the phosphatidylserine decarboxylase family. PSD-B subfamily. Prokaryotic type I sub-subfamily. Heterodimer of a large membrane-associated beta subunit and a small pyruvoyl-containing alpha subunit. Pyruvate is required as a cofactor. In terms of processing, is synthesized initially as an inactive proenzyme. Formation of the active enzyme involves a self-maturation process in which the active site pyruvoyl group is generated from an internal serine residue via an autocatalytic post-translational modification. Two non-identical subunits are generated from the proenzyme in this reaction, and the pyruvate is formed at the N-terminus of the alpha chain, which is derived from the carboxyl end of the proenzyme. The autoendoproteolytic cleavage occurs by a canonical serine protease mechanism, in which the side chain hydroxyl group of the serine supplies its oxygen atom to form the C-terminus of the beta chain, while the remainder of the serine residue undergoes an oxidative deamination to produce ammonia and the pyruvoyl prosthetic group on the alpha chain. During this reaction, the Ser that is part of the protease active site of the proenzyme becomes the pyruvoyl prosthetic group, which constitutes an essential element of the active site of the mature decarboxylase.

It is found in the cell membrane. It carries out the reaction a 1,2-diacyl-sn-glycero-3-phospho-L-serine + H(+) = a 1,2-diacyl-sn-glycero-3-phosphoethanolamine + CO2. It participates in phospholipid metabolism; phosphatidylethanolamine biosynthesis; phosphatidylethanolamine from CDP-diacylglycerol: step 2/2. Its function is as follows. Catalyzes the formation of phosphatidylethanolamine (PtdEtn) from phosphatidylserine (PtdSer). This Vibrio parahaemolyticus serotype O3:K6 (strain RIMD 2210633) protein is Phosphatidylserine decarboxylase proenzyme.